The following is a 184-amino-acid chain: Large ribosomal subunit protein uL5 (184 aa).

Belongs to the universal ribosomal protein uL5 family. Part of the 50S ribosomal subunit; part of the 5S rRNA/L5/L18/L25 subcomplex. Contacts the 5S rRNA and the P site tRNA. Forms a bridge to the 30S subunit in the 70S ribosome.

Functionally, this is one of the proteins that bind and probably mediate the attachment of the 5S RNA into the large ribosomal subunit, where it forms part of the central protuberance. In the 70S ribosome it contacts protein S13 of the 30S subunit (bridge B1b), connecting the 2 subunits; this bridge is implicated in subunit movement. Contacts the P site tRNA; the 5S rRNA and some of its associated proteins might help stabilize positioning of ribosome-bound tRNAs. The protein is Large ribosomal subunit protein uL5 of Thermotoga sp. (strain RQ2).